Here is a 525-residue protein sequence, read N- to C-terminus: Erythropoietin receptor (525 aa).

The signal sequence occupies residues Met-1–Ala-32. At Glu-33 to Leu-249 the chain is on the extracellular side. A disulfide bridge links Cys-58 with Cys-68. 4 N-linked (GlcNAc...) asparagine glycosylation sites follow: Asn-77, Asn-100, Asn-149, and Asn-185. Cysteines 91 and 107 form a disulfide. The 101-residue stretch at Pro-146–Asp-246 folds into the Fibronectin type-III domain. A WSXWS motif motif is present at residues Trp-232–Thr-236. Residues Leu-250 to Phe-270 form a helical membrane-spanning segment. Residues Met-271–Ser-525 are Cytoplasmic-facing. The Box 1 motif signature appears at Val-281–Glu-289. 2 disordered regions span residues Ala-434–Pro-459 and Leu-492–Pro-513. A compositionally biased stretch (polar residues) spans Glu-447–Pro-459. An ITIM motif motif is present at residues Leu-487 to Leu-492.

The protein belongs to the type I cytokine receptor family. Type 1 subfamily. In terms of tissue distribution, expressed in the ventral blood island from stage 28 through to stage 36. Expressed in the circulating blood by stage 40. In the adult, highly expressed in peripheral blood cells including immature erythrocytes and basophils, and moderately expressed in the hematopoietic organs: liver, kidney and spleen. Expressed at a low level in adult brain.

It is found in the cell membrane. Functionally, receptor for erythropoietin. Mediates erythropoietin-induced erythroblast proliferation and differentiation. The protein is Erythropoietin receptor of Xenopus laevis (African clawed frog).